The chain runs to 177 residues: Large ribosomal subunit protein uL6 (177 aa).

Belongs to the universal ribosomal protein uL6 family. In terms of assembly, part of the 50S ribosomal subunit.

This protein binds to the 23S rRNA, and is important in its secondary structure. It is located near the subunit interface in the base of the L7/L12 stalk, and near the tRNA binding site of the peptidyltransferase center. This Psychromonas ingrahamii (strain DSM 17664 / CCUG 51855 / 37) protein is Large ribosomal subunit protein uL6.